The following is a 368-amino-acid chain: 1-deoxy-D-xylulose 5-phosphate reductoisomerase (368 aa).

Positions 7, 8, 9, 10, 31, 32, 33, and 113 each coordinate NADPH. Position 114 (K114) interacts with 1-deoxy-D-xylulose 5-phosphate. E115 provides a ligand contact to NADPH. D133 contributes to the Mn(2+) binding site. 4 residues coordinate 1-deoxy-D-xylulose 5-phosphate: S134, E135, S158, and H181. A Mn(2+)-binding site is contributed by E135. G187 contacts NADPH. 1-deoxy-D-xylulose 5-phosphate contacts are provided by S194, N199, K200, and E203. E203 provides a ligand contact to Mn(2+).

The protein belongs to the DXR family. Mg(2+) is required as a cofactor. Mn(2+) serves as cofactor.

It carries out the reaction 2-C-methyl-D-erythritol 4-phosphate + NADP(+) = 1-deoxy-D-xylulose 5-phosphate + NADPH + H(+). Its pathway is isoprenoid biosynthesis; isopentenyl diphosphate biosynthesis via DXP pathway; isopentenyl diphosphate from 1-deoxy-D-xylulose 5-phosphate: step 1/6. In terms of biological role, catalyzes the NADPH-dependent rearrangement and reduction of 1-deoxy-D-xylulose-5-phosphate (DXP) to 2-C-methyl-D-erythritol 4-phosphate (MEP). This chain is 1-deoxy-D-xylulose 5-phosphate reductoisomerase, found in Helicobacter pylori (strain P12).